The primary structure comprises 248 residues: Probable transcriptional regulatory protein Acel_1346 (248 aa).

The protein belongs to the TACO1 family.

It is found in the cytoplasm. The chain is Probable transcriptional regulatory protein Acel_1346 from Acidothermus cellulolyticus (strain ATCC 43068 / DSM 8971 / 11B).